A 75-amino-acid chain; its full sequence is Kappa-scoloptoxin(03)-Ssm1e (75 aa).

The N-terminal stretch at 1-23 (MKSSMAILLVMALIIFTLDKNYS) is a signal peptide.

The protein belongs to the scoloptoxin-03 family. Post-translationally, contains 3 disulfide bonds. In terms of tissue distribution, expressed by the venom gland.

The protein resides in the secreted. Functionally, inhibits voltage-gated potassium channels. The protein is Kappa-scoloptoxin(03)-Ssm1e of Scolopendra mutilans (Chinese red-headed centipede).